Reading from the N-terminus, the 1325-residue chain is Nephrocystin-3 (1325 aa).

A disordered region spans residues 1-20 (MGTASSLVSPTGGEVIEDTY). Gly-2 carries the N-myristoyl glycine lipid modification. A coiled-coil region spans residues 107-203 (SMGRREAKLD…QRLQAQGIQV (97 aa)). TPR repeat units follow at residues 467–500 (TPEE…AHEL), 881–914 (CLLN…KGAM), 916–937 (TEYF…MLCL), 938–971 (ADLY…RETA), 980–1013 (AQSL…SENA), 1022–1055 (AREL…RQQA), 1088–1121 (ARTL…RERV), 1130–1163 (AQSL…RRRA), 1172–1205 (AYTV…RQKS), 1214–1247 (ATAL…YEDS), and 1256–1289 (GETL…KEAE). Residues 1293–1325 (LGGKAPSRQSSSGDTFLFKTTHSPNVFLPQGQS) are disordered. Residues 1299–1325 (SRQSSSGDTFLFKTTHSPNVFLPQGQS) are compositionally biased toward polar residues.

In terms of assembly, interacts with NPHP1 and INVS/NPHP2. Interacts (when myristoylated) with UNC119 and UNC119B; interaction is required for localization to cilium. Interacts with CEP164. Component of a complex containing at least ANKS6, INVS, NEK8 and NPHP3. ANKS6 may organize complex assembly by linking INVS and NPHP3 to NEK8 and INVS may target the complex to the proximal ciliary axoneme.

It localises to the cell projection. The protein localises to the cilium. Its function is as follows. Required for normal ciliary development and function. Inhibits disheveled-1-induced canonical Wnt-signaling activity and may also play a role in the control of non-canonical Wnt signaling that regulates planar cell polarity. Probably acts as a molecular switch between different Wnt signaling pathways. Required for proper convergent extension cell movements. This is Nephrocystin-3 (Nphp3) from Mus musculus (Mouse).